We begin with the raw amino-acid sequence, 207 residues long: Transcription factor bHLH149 (207 aa).

The disordered stretch occupies residues 1–25 (MVESLFPSIENTGESSRRKKPRISE). Residues 132–181 (KSRKGLTETNRIKLPAVERKLKILGRLVPGCRKVSVPNLLDEATDYIAAL) form the bHLH domain.

Homodimer. Interacts with PRE3.

Its subcellular location is the nucleus. Atypical bHLH transcription factor probably unable to bind DNA. Negatively regulates brassinosteroid signaling. The protein is Transcription factor bHLH149 (BHLH149) of Arabidopsis thaliana (Mouse-ear cress).